The chain runs to 123 residues: Guanine nucleotide exchange factor MSS4 (123 aa).

The residue at position 1 (Met-1) is an N-acetylmethionine. Residues 9–123 (ELVSAEGRNR…YVALERVSHE (115 aa)) enclose the MSS4 domain. The Zn(2+) site is built by Cys-23, Cys-26, Cys-94, and Cys-97.

This sequence belongs to the DSS4/MSS4 family. Interacts with RAB8A.

Functionally, guanine-nucleotide-releasing protein that acts on members of the SEC4/YPT1/RAB subfamily. Stimulates GDP release from both YPT1, RAB3A and RAB10, but is less active on these proteins than on the SEC4 protein. Might play a general role in vesicular transport. This is Guanine nucleotide exchange factor MSS4 from Mus musculus (Mouse).